We begin with the raw amino-acid sequence, 88 residues long: MEKREFNIIAETGIHARPATLLVQAASKFNSDINLEYKGKSVNLKSIMGVMSLGVGQGADVTISAEGADEADAIAAITDTMKKEGLAE.

The 88-residue stretch at Met-1–Glu-88 folds into the HPr domain. His-15 functions as the Pros-phosphohistidine intermediate in the catalytic mechanism. Ser-46 is subject to Phosphoserine; by HPrK/P.

Belongs to the HPr family.

It localises to the cytoplasm. With respect to regulation, phosphorylation on Ser-46 inhibits the phosphoryl transfer from enzyme I to HPr. In terms of biological role, general (non sugar-specific) component of the phosphoenolpyruvate-dependent sugar phosphotransferase system (sugar PTS). This major carbohydrate active-transport system catalyzes the phosphorylation of incoming sugar substrates concomitantly with their translocation across the cell membrane. The phosphoryl group from phosphoenolpyruvate (PEP) is transferred to the phosphoryl carrier protein HPr by enzyme I. Phospho-HPr then transfers it to the PTS EIIA domain. Its function is as follows. P-Ser-HPr interacts with the catabolite control protein A (CcpA), forming a complex that binds to DNA at the catabolite response elements cre, operator sites preceding a large number of catabolite-regulated genes. Thus, P-Ser-HPr is a corepressor in carbon catabolite repression (CCR), a mechanism that allows bacteria to coordinate and optimize the utilization of available carbon sources. P-Ser-HPr also plays a role in inducer exclusion, in which it probably interacts with several non-PTS permeases and inhibits their transport activity. The polypeptide is Phosphocarrier protein HPr (ptsH) (Lacticaseibacillus casei (Lactobacillus casei)).